The following is a 178-amino-acid chain: Large ribosomal subunit protein uL6 (178 aa).

This sequence belongs to the universal ribosomal protein uL6 family. As to quaternary structure, part of the 50S ribosomal subunit.

This protein binds to the 23S rRNA, and is important in its secondary structure. It is located near the subunit interface in the base of the L7/L12 stalk, and near the tRNA binding site of the peptidyltransferase center. The protein is Large ribosomal subunit protein uL6 of Levilactobacillus brevis (strain ATCC 367 / BCRC 12310 / CIP 105137 / JCM 1170 / LMG 11437 / NCIMB 947 / NCTC 947) (Lactobacillus brevis).